The sequence spans 551 residues: uncharacterized protein (551 aa).

The Cytoplasmic portion of the chain corresponds to 1–7 (MKKNSSV). A helical transmembrane segment spans residues 8-28 (VFFLVGLSQFVTMAFLIIGSI). At 29-88 (TAPIFKQIGYSKYDEITYGTFGYCKEGSCSKASYNYHPDELSDSDSNWKLNSNARSILGK) the chain is on the vacuolar side. Residues 89–109 (IIFITPIAAGLNFLGFLCTIM) form a helical membrane-spanning segment. The Cytoplasmic segment spans residues 110 to 135 (SVLLINVLSSDRVGSASAIMFFVNLT). Residues 136–156 (FSTLGFLSASLICIVVFLLFY) traverse the membrane as a helical segment. The Vacuolar segment spans residues 157-160 (PHVT). Residues 161-181 (WCSWVLIPGAALSLLVIPLIF) traverse the membrane as a helical segment. Over 182–551 (SAYSRSSGSR…TSLNNPYGFR (370 aa)) the chain is Cytoplasmic. Phosphoserine is present on residues serine 224 and serine 232. Residues 280–341 (AKDMENSNGS…NGSNTSNNIN (62 aa)) form a disordered region. Positions 307–320 (TSTYSVIESESGLK) are enriched in polar residues. The span at 321–341 (NGSVSNNYVRNNGSNTSNNIN) shows a compositional bias: low complexity. Serine 363 is subject to Phosphoserine.

As to quaternary structure, forms homo dimers or homooligomers in MCC microdomains. Interacts with BOI2 and RHO3, two key regulators of secretion.

The protein resides in the vacuole membrane. The protein localises to the cell membrane. In terms of biological role, protein involved in secretion and cell wall organization. Contributes to cell surface-related functions as a auxiliary component of MCC/eisosome that specifically interacts with the secretory pathway. This is an uncharacterized protein from Saccharomyces cerevisiae (strain ATCC 204508 / S288c) (Baker's yeast).